The primary structure comprises 272 residues: HMP-PP phosphatase (272 aa).

The active-site Nucleophile is aspartate 8. Aspartate 8, aspartate 10, and aspartate 212 together coordinate Mg(2+).

This sequence belongs to the HAD-like hydrolase superfamily. Cof family. Mg(2+) is required as a cofactor.

It catalyses the reaction 4-amino-2-methyl-5-(diphosphooxymethyl)pyrimidine + H2O = 4-amino-2-methyl-5-(phosphooxymethyl)pyrimidine + phosphate + H(+). In terms of biological role, catalyzes the hydrolysis of 4-amino-2-methyl-5-hydroxymethylpyrimidine pyrophosphate (HMP-PP) to 4-amino-2-methyl-5-hydroxymethylpyrimidine phosphate (HMP-P). This chain is HMP-PP phosphatase, found in Salmonella choleraesuis (strain SC-B67).